Consider the following 159-residue polypeptide: 2-C-methyl-D-erythritol 2,4-cyclodiphosphate synthase (159 aa).

Aspartate 8 and histidine 10 together coordinate a divalent metal cation. Residues 8 to 10 (DVH) and 34 to 35 (HS) contribute to the 4-CDP-2-C-methyl-D-erythritol 2-phosphate site. Histidine 42 is an a divalent metal cation binding site. 4-CDP-2-C-methyl-D-erythritol 2-phosphate contacts are provided by residues 56-58 (DIG), 61-65 (FPDTD), 100-106 (AQAPKMA), 132-135 (TTTE), phenylalanine 139, and arginine 142.

Belongs to the IspF family. In terms of assembly, homotrimer. Requires a divalent metal cation as cofactor.

It catalyses the reaction 4-CDP-2-C-methyl-D-erythritol 2-phosphate = 2-C-methyl-D-erythritol 2,4-cyclic diphosphate + CMP. Its pathway is isoprenoid biosynthesis; isopentenyl diphosphate biosynthesis via DXP pathway; isopentenyl diphosphate from 1-deoxy-D-xylulose 5-phosphate: step 4/6. Its function is as follows. Involved in the biosynthesis of isopentenyl diphosphate (IPP) and dimethylallyl diphosphate (DMAPP), two major building blocks of isoprenoid compounds. Catalyzes the conversion of 4-diphosphocytidyl-2-C-methyl-D-erythritol 2-phosphate (CDP-ME2P) to 2-C-methyl-D-erythritol 2,4-cyclodiphosphate (ME-CPP) with a corresponding release of cytidine 5-monophosphate (CMP). The protein is 2-C-methyl-D-erythritol 2,4-cyclodiphosphate synthase of Cronobacter sakazakii (strain ATCC BAA-894) (Enterobacter sakazakii).